A 384-amino-acid chain; its full sequence is Glutamate 5-kinase (384 aa).

Residue K24 coordinates ATP. Residues S64, D149, and N161 each contribute to the substrate site. ATP is bound by residues 181 to 182 (TD) and 223 to 229 (TGGMRTK). In terms of domain architecture, PUA spans 288-370 (PGAILIDAGA…RDIQPLLGYT (83 aa)).

It belongs to the glutamate 5-kinase family.

The protein resides in the cytoplasm. The catalysed reaction is L-glutamate + ATP = L-glutamyl 5-phosphate + ADP. It participates in amino-acid biosynthesis; L-proline biosynthesis; L-glutamate 5-semialdehyde from L-glutamate: step 1/2. Its function is as follows. Catalyzes the transfer of a phosphate group to glutamate to form L-glutamate 5-phosphate. The sequence is that of Glutamate 5-kinase from Xylella fastidiosa (strain 9a5c).